Consider the following 678-residue polypeptide: Putative pentatricopeptide repeat-containing protein At3g18840 (678 aa).

PPR repeat units lie at residues 22-56 (TAVS…NVYS), 57-84 (WNAV…NCER), 85-116 (DLIT…MHRK), 124-158 (DDFT…GNDG), 159-190 (TKFA…CVEF), 192-222 (DSVA…NPEL), 224-258 (DTIS…GLKW), 259-293 (DEHS…GSYS), 294-324 (NKFV…YGFG), 325-359 (NLYS…NLVV), 360-390 (WTAM…ETNT), 392-426 (DSLV…GILM), 427-457 (DKKL…SFER), 458-492 (DTVM…GFKP), 493-528 (DEIT…NISP), and 529-563 (ETGH…EKDA). Residues 565-640 (ILGAFLNACS…FSGCSWANID (76 aa)) are type E motif. A type E(+) motif region spans residues 641–671 (KQFHMFTSSDISHYETEAIYAMLHFVTKDLS).

The protein belongs to the PPR family. PCMP-E subfamily.

This is Putative pentatricopeptide repeat-containing protein At3g18840 (PCMP-E92) from Arabidopsis thaliana (Mouse-ear cress).